The primary structure comprises 261 residues: Lys-63-specific deubiquitinase BRCC36 (261 aa).

Residues 6–149 enclose the MPN domain; that stretch reads VHIQGDAFLV…YTCFQSVQAQ (144 aa). Zn(2+) is bound by residues His92, His94, and Asp105. The short motif at 92 to 105 is the JAMM motif element; that stretch reads HSHPHITVWPSHVD.

It belongs to the peptidase M67A family. BRCC36 subfamily. Component of the BRCA1-A complex, at least composed of brca1, bard1, uimc1/rap80, abraxas1, brcc3/brcc36, babam2 and babam1/nba1. In the BRCA1-A complex, interacts directly with ABRAXAS1 and babam2. Component of the BRISC complex, at least composed of ABRAXAS2, brcc3/brcc36, babam2 and babam1/nba1. Within the complex, interacts directly with abraxas2. Both the BRCA1-A complex and the BRISC complex bind polyubiquitin. It depends on Zn(2+) as a cofactor.

It localises to the nucleus. Its subcellular location is the cytoplasm. The protein localises to the cytoskeleton. It is found in the spindle pole. In terms of biological role, metalloprotease that specifically cleaves 'Lys-63'-linked polyubiquitin chains. Does not have activity toward 'Lys-48'-linked polyubiquitin chains. Component of the BRCA1-A complex, a complex that specifically recognizes 'Lys-63'-linked ubiquitinated histones H2A and H2AX at DNA lesions sites, leading to target the brca1-bard1 heterodimer to sites of DNA damage at double-strand breaks (DSBs). In the BRCA1-A complex, it specifically removes 'Lys-63'-linked ubiquitin on histones H2A and H2AX, antagonizing the rnf8-dependent ubiquitination at double-strand breaks (DSBs). Catalytic subunit of the BRISC complex, a multiprotein complex that specifically cleaves 'Lys-63'-linked ubiquitin in various substrates. Mediates the specific 'Lys-63'-specific deubiquitination associated with the COP9 signalosome complex (CSN), via the interaction of the BRISC complex with the CSN complex. The BRISC complex is required for normal mitotic spindle assembly and microtubule attachment to kinetochores via its role in deubiquitinating numa1. Plays a role in interferon signaling via its role in the deubiquitination of the interferon receptor ifnar1; deubiquitination increases ifnar1 activity by enhancing its stability and cell surface expression. Acts as a regulator of the NLRP3 inflammasome by mediating deubiquitination of nlrp3. Down-regulates the response to bacterial lipopolysaccharide (LPS) via its role in ifnar1 deubiquitination. In Xenopus laevis (African clawed frog), this protein is Lys-63-specific deubiquitinase BRCC36 (brcc3).